We begin with the raw amino-acid sequence, 381 residues long: Tryptophan--tRNA ligase (381 aa).

Positions 82–90 (PSLGMHIGH) match the 'HIGH' region motif. The 'KMSKS' region motif lies at 254–258 (KMSSS).

This sequence belongs to the class-I aminoacyl-tRNA synthetase family.

The protein localises to the cytoplasm. The catalysed reaction is tRNA(Trp) + L-tryptophan + ATP = L-tryptophyl-tRNA(Trp) + AMP + diphosphate + H(+). The protein is Tryptophan--tRNA ligase of Sulfurisphaera tokodaii (strain DSM 16993 / JCM 10545 / NBRC 100140 / 7) (Sulfolobus tokodaii).